The following is a 167-amino-acid chain: Mediator of RNA polymerase II transcription subunit 10 (167 aa).

A disordered region spans residues 54-92; the sequence is STHTKPHPPPPPPPQPTDPTTAAAPALRDNPDPPLSSIQ. A compositionally biased stretch (pro residues) spans 60 to 70; sequence HPPPPPPPQPT.

Belongs to the Mediator complex subunit 10 family. In terms of assembly, component of the Mediator complex.

It localises to the nucleus. In terms of biological role, component of the Mediator complex, a coactivator involved in the regulated transcription of nearly all RNA polymerase II-dependent genes. Mediator functions as a bridge to convey information from gene-specific regulatory proteins to the basal RNA polymerase II transcription machinery. Mediator is recruited to promoters by direct interactions with regulatory proteins and serves as a scaffold for the assembly of a functional preinitiation complex with RNA polymerase II and the general transcription factors. This Aspergillus clavatus (strain ATCC 1007 / CBS 513.65 / DSM 816 / NCTC 3887 / NRRL 1 / QM 1276 / 107) protein is Mediator of RNA polymerase II transcription subunit 10 (nut2).